A 209-amino-acid chain; its full sequence is Endonuclease III (209 aa).

The HhH domain occupies Arg108 to Asn127. [4Fe-4S] cluster-binding residues include Cys187, Cys194, Cys197, and Cys203.

The protein belongs to the Nth/MutY family. Requires [4Fe-4S] cluster as cofactor.

It catalyses the reaction 2'-deoxyribonucleotide-(2'-deoxyribose 5'-phosphate)-2'-deoxyribonucleotide-DNA = a 3'-end 2'-deoxyribonucleotide-(2,3-dehydro-2,3-deoxyribose 5'-phosphate)-DNA + a 5'-end 5'-phospho-2'-deoxyribonucleoside-DNA + H(+). DNA repair enzyme that has both DNA N-glycosylase activity and AP-lyase activity. The DNA N-glycosylase activity releases various damaged pyrimidines from DNA by cleaving the N-glycosidic bond, leaving an AP (apurinic/apyrimidinic) site. The AP-lyase activity cleaves the phosphodiester bond 3' to the AP site by a beta-elimination, leaving a 3'-terminal unsaturated sugar and a product with a terminal 5'-phosphate. The polypeptide is Endonuclease III (Buchnera aphidicola subsp. Schizaphis graminum (strain Sg)).